A 271-amino-acid polypeptide reads, in one-letter code: Putative phosphoenolpyruvate synthase regulatory protein (271 aa).

Residue 151 to 158 (GVSRSGKT) participates in ADP binding.

Belongs to the pyruvate, phosphate/water dikinase regulatory protein family. PSRP subfamily.

The enzyme catalyses [pyruvate, water dikinase] + ADP = [pyruvate, water dikinase]-phosphate + AMP + H(+). The catalysed reaction is [pyruvate, water dikinase]-phosphate + phosphate + H(+) = [pyruvate, water dikinase] + diphosphate. In terms of biological role, bifunctional serine/threonine kinase and phosphorylase involved in the regulation of the phosphoenolpyruvate synthase (PEPS) by catalyzing its phosphorylation/dephosphorylation. This is Putative phosphoenolpyruvate synthase regulatory protein from Burkholderia cenocepacia (strain ATCC BAA-245 / DSM 16553 / LMG 16656 / NCTC 13227 / J2315 / CF5610) (Burkholderia cepacia (strain J2315)).